The sequence spans 748 residues: Meprin A subunit alpha (748 aa).

The first 20 residues, methionine 1–alanine 20, serve as a signal peptide directing secretion. Residues valine 21–arginine 66 constitute a propeptide that is removed on maturation. Residues asparagine 67–threonine 261 form the Peptidase M12A domain. Topologically, residues asparagine 67 to serine 719 are extracellular. Intrachain disulfides connect cysteine 108-cysteine 260, cysteine 129-cysteine 148, and cysteine 270-cysteine 432. N-linked (GlcNAc...) asparagine glycosylation occurs at asparagine 141. Residue histidine 156 coordinates Zn(2+). Residue glutamate 157 is part of the active site. Zn(2+) is bound by residues histidine 160 and histidine 166. Residues asparagine 223, asparagine 259, asparagine 319, asparagine 441, and asparagine 542 are each glycosylated (N-linked (GlcNAc...) asparagine). Positions threonine 265–threonine 434 constitute an MAM domain. The MATH domain occupies glycine 435 to phenylalanine 596. Positions leucine 641 to tryptophan 668 are disordered. The 41-residue stretch at phenylalanine 672 to glutamine 712 folds into the EGF-like domain. 3 cysteine pairs are disulfide-bonded: cysteine 676–cysteine 687, cysteine 681–cysteine 696, and cysteine 698–cysteine 711. A helical transmembrane segment spans residues leucine 720 to phenylalanine 739. Residues serine 740–glutamine 748 are Cytoplasmic-facing.

Homotetramer consisting of disulfide-linked alpha subunits, homooligomer consisting of disulfide-linked alpha subunit homodimers, or heterotetramer of two alpha and two beta subunits formed by non-covalent association of two disulfide-linked heterodimers. Interacts with MBL2 through its carbohydrate moiety. This interaction may inhibit its catalytic activity. Requires Zn(2+) as cofactor. N-glycosylated; contains GlcNAc, galactose, mannose and a small amount of fucose. In terms of tissue distribution, colocalized with E-24.11 in proximal tubules of juxtamedullary nephrons.

The protein resides in the membrane. The enzyme catalyses Hydrolysis of protein and peptide substrates preferentially on carboxyl side of hydrophobic residues.. Inhibited by actinonin. This Rattus norvegicus (Rat) protein is Meprin A subunit alpha (Mep1a).